The chain runs to 297 residues: uncharacterized protein (297 aa).

7 helical membrane-spanning segments follow: residues 14–34 (LFLMFIGTVSFLFIFIPFLKF), 55–75 (LLLGPIYGFFAVMLVTLIYFF), 81–101 (FYFGIYSLIPPTLAVISAGAL), 110–130 (AIILIVGLLLFYLTDVGRVAF), 135–155 (LSTLALLLILIFREKISKLLF), 163–183 (IVGATILSFSSVMTDHLYGSI), and 208–228 (LIMTVIGAFFVIFAIEISKCF).

Its subcellular location is the cell membrane. This is an uncharacterized protein from Methanocaldococcus jannaschii (strain ATCC 43067 / DSM 2661 / JAL-1 / JCM 10045 / NBRC 100440) (Methanococcus jannaschii).